Reading from the N-terminus, the 382-residue chain is D-galactonate dehydratase (382 aa).

Residue Asp183 coordinates Mg(2+). The Proton donor role is filled by His185. Glu209 and Glu235 together coordinate Mg(2+). The Proton acceptor role is filled by His285. Positions 361-382 are disordered; it reads NENPPDWRNPVWRHSDGSIAEW.

The protein belongs to the mandelate racemase/muconate lactonizing enzyme family. GalD subfamily. It depends on Mg(2+) as a cofactor.

The catalysed reaction is D-galactonate = 2-dehydro-3-deoxy-D-galactonate + H2O. It participates in carbohydrate acid metabolism; D-galactonate degradation; D-glyceraldehyde 3-phosphate and pyruvate from D-galactonate: step 1/3. Its function is as follows. Catalyzes the dehydration of D-galactonate to 2-keto-3-deoxy-D-galactonate. The sequence is that of D-galactonate dehydratase from Xanthomonas oryzae pv. oryzae (strain MAFF 311018).